The sequence spans 522 residues: Sugar carrier protein A (522 aa).

The Cytoplasmic portion of the chain corresponds to 1-22 (MAGGSLAPAGVAKERAEQYQGK). The next 12 helical transmembrane spans lie at 23–43 (VTFA…IFGY), 87–107 (AFTS…GPIT), 121–141 (ISFL…MLLL), 144–164 (IMLG…LSEM), 173–193 (LNIM…MVNY), 205–225 (LSLG…LLLP), 286–306 (LVMA…IILF), 322–342 (ALYS…ISIA), 351–371 (FLLI…AIIL), 384–404 (SFSV…GWSW), 430–450 (AVNL…LCAF), and 453–473 (GIFL…YIFL). Residues 474–522 (PETKGVPIEEMIFLWRKHWFWKKIVPGQPEVDDSRESMEMGEAVASRIK) lie on the Cytoplasmic side of the membrane.

This sequence belongs to the major facilitator superfamily. Sugar transporter (TC 2.A.1.1) family.

It is found in the membrane. The protein is Sugar carrier protein A (STA) of Ricinus communis (Castor bean).